The following is a 342-amino-acid chain: Transcription initiation factor TFIID subunit 12 (342 aa).

Residues 1–221 (MKMEEFSPPT…QAPPPQMIPA (221 aa)) are disordered. Residues 12-35 (PNNHVIVQANPQIAAALSTNSPMQ) are compositionally biased toward polar residues. 4 stretches are compositionally biased toward low complexity: residues 39–59 (PPQGHQNPNEQQQQQQFVGQP), 67–89 (PMRMQMPQQQIRQMPYPSPQMRA), 96–146 (QQQQ…HLMG), and 180–192 (QQIMQVQHQQQHQ). Pro residues predominate over residues 193-218 (QPPPSQQIQQPPIPQPQQQQAPPPQM). Positions 230-297 (EKSKLDDLMQ…EFILKNVYNM (68 aa)) constitute a Histone-fold domain.

This sequence belongs to the TAF12 family. Interacts (via histone-fold domain) with taf-4 (via the histone-fold domain). Interaction may facilitate the nuclear localization of taf-4.

The protein localises to the nucleus. Its function is as follows. Part of the general transcription factor complex TFIID. Plays a role in recruiting taf-4 to the nucleus and thereby activating transcription initiation by RNA polymerase II, as part of the TFIID complex. This chain is Transcription initiation factor TFIID subunit 12, found in Caenorhabditis elegans.